The sequence spans 456 residues: Bifunctional protein GlmU (456 aa).

The tract at residues 1–228 (MPQNTLNIVI…SHLAAGVNNK (228 aa)) is pyrophosphorylase. Residues 11 to 14 (LAAG), K25, Q75, 80 to 81 (GT), 102 to 104 (YGD), G138, E153, N168, and N226 contribute to the UDP-N-acetyl-alpha-D-glucosamine site. D104 contributes to the Mg(2+) binding site. N226 is a binding site for Mg(2+). A linker region spans residues 229–249 (LQLTELERIFQTEQAQELLKA). The interval 250-456 (GVTLRDPARF…GWVRPEKDKQ (207 aa)) is N-acetyltransferase. Residues R332 and K350 each contribute to the UDP-N-acetyl-alpha-D-glucosamine site. The Proton acceptor role is filled by H362. Positions 365 and 376 each coordinate UDP-N-acetyl-alpha-D-glucosamine. Residues A379, 385–386 (NY), S404, A422, and R439 each bind acetyl-CoA.

This sequence in the N-terminal section; belongs to the N-acetylglucosamine-1-phosphate uridyltransferase family. The protein in the C-terminal section; belongs to the transferase hexapeptide repeat family. As to quaternary structure, homotrimer. Mg(2+) is required as a cofactor.

The protein resides in the cytoplasm. It catalyses the reaction alpha-D-glucosamine 1-phosphate + acetyl-CoA = N-acetyl-alpha-D-glucosamine 1-phosphate + CoA + H(+). The catalysed reaction is N-acetyl-alpha-D-glucosamine 1-phosphate + UTP + H(+) = UDP-N-acetyl-alpha-D-glucosamine + diphosphate. Its pathway is nucleotide-sugar biosynthesis; UDP-N-acetyl-alpha-D-glucosamine biosynthesis; N-acetyl-alpha-D-glucosamine 1-phosphate from alpha-D-glucosamine 6-phosphate (route II): step 2/2. It functions in the pathway nucleotide-sugar biosynthesis; UDP-N-acetyl-alpha-D-glucosamine biosynthesis; UDP-N-acetyl-alpha-D-glucosamine from N-acetyl-alpha-D-glucosamine 1-phosphate: step 1/1. The protein operates within bacterial outer membrane biogenesis; LPS lipid A biosynthesis. Catalyzes the last two sequential reactions in the de novo biosynthetic pathway for UDP-N-acetylglucosamine (UDP-GlcNAc). The C-terminal domain catalyzes the transfer of acetyl group from acetyl coenzyme A to glucosamine-1-phosphate (GlcN-1-P) to produce N-acetylglucosamine-1-phosphate (GlcNAc-1-P), which is converted into UDP-GlcNAc by the transfer of uridine 5-monophosphate (from uridine 5-triphosphate), a reaction catalyzed by the N-terminal domain. The chain is Bifunctional protein GlmU from Neisseria meningitidis serogroup B (strain ATCC BAA-335 / MC58).